A 498-amino-acid polypeptide reads, in one-letter code: Neoxanthin synthase, chloroplastic (498 aa).

The N-terminal 33 residues, 1–33 (METLLKPLTSLLLSSPTPHRSIFQQNPPSLNPT), are a transit peptide targeting the chloroplast. Positions 16-38 (PTPHRSIFQQNPPSLNPTTKKKS) are disordered. Residues 22–33 (IFQQNPPSLNPT) are compositionally biased toward polar residues. 84–112 (VIIIGAGPAGLRLAEHVSKYGIKVCCVDP) contacts NAD(+).

Belongs to the lycopene cyclase family.

Its subcellular location is the plastid. The protein resides in the chloroplast. The catalysed reaction is all-trans-violaxanthin = all-trans-neoxanthin. Its pathway is carotenoid biosynthesis; neoxanthin biosynthesis. Its function is as follows. Involved in the synthesis of neoxanthin, the last product of carotenoid synthesis and a precursor of abscisic acid. The sequence is that of Neoxanthin synthase, chloroplastic (NXS) from Solanum tuberosum (Potato).